The primary structure comprises 312 residues: MKSMLVVTISVWLILAPTSTWAVNTIIYNVGSTTISKYATFLDDLRNEAKDPNLKCYGIPMLPNTNSNPKYVLVELQGSNKKTITLMLRRNNLYVMGYSDPFDTSKCRYHIFNDISGTERQDVETTLCPNSNSRVSKNINYDSRYPTLESKVGVKSRSQVQLGIQILDSDIGKISGVTSFSEKTEAEFLLVAIQISEAARFKYIENQVKTNFNRAFNPNPKVLNLEETWGKISTAIHDAKNGVLPKPLELVDASGAKWIVLRVDEIKPDVALLNYVSGSCQTTYNQNAMFPQLIMSTYYNYMANLGDLFEEF.

Residues 1–22 (MKSMLVVTISVWLILAPTSTWA) form the signal peptide. 2 disulfide bridges follow: cysteine 56–cysteine 280 and cysteine 107–cysteine 128. The active site involves glutamate 197. Residues 284–312 (YNQNAMFPQLIMSTYYNYMANLGDLFEEF) constitute a propeptide that is removed on maturation.

The catalysed reaction is Endohydrolysis of the N-glycosidic bond at one specific adenosine on the 28S rRNA.. Its function is as follows. Inhibits protein synthesis in vitro. The sequence is that of Heterotepalin-4 from Phytolacca heterotepala (Mexican pokeweed).